Here is a 190-residue protein sequence, read N- to C-terminus: Crossover junction endodeoxyribonuclease RuvC (190 aa).

Residues aspartate 8, glutamate 67, and aspartate 139 contribute to the active site. Aspartate 8, glutamate 67, and aspartate 139 together coordinate Mg(2+).

The protein belongs to the RuvC family. As to quaternary structure, homodimer which binds Holliday junction (HJ) DNA. The HJ becomes 2-fold symmetrical on binding to RuvC with unstacked arms; it has a different conformation from HJ DNA in complex with RuvA. In the full resolvosome a probable DNA-RuvA(4)-RuvB(12)-RuvC(2) complex forms which resolves the HJ. Mg(2+) serves as cofactor.

Its subcellular location is the cytoplasm. The enzyme catalyses Endonucleolytic cleavage at a junction such as a reciprocal single-stranded crossover between two homologous DNA duplexes (Holliday junction).. The RuvA-RuvB-RuvC complex processes Holliday junction (HJ) DNA during genetic recombination and DNA repair. Endonuclease that resolves HJ intermediates. Cleaves cruciform DNA by making single-stranded nicks across the HJ at symmetrical positions within the homologous arms, yielding a 5'-phosphate and a 3'-hydroxyl group; requires a central core of homology in the junction. The consensus cleavage sequence is 5'-(A/T)TT(C/G)-3'. Cleavage occurs on the 3'-side of the TT dinucleotide at the point of strand exchange. HJ branch migration catalyzed by RuvA-RuvB allows RuvC to scan DNA until it finds its consensus sequence, where it cleaves and resolves the cruciform DNA. The polypeptide is Crossover junction endodeoxyribonuclease RuvC (Pasteurella multocida (strain Pm70)).